A 287-amino-acid chain; its full sequence is MAECSTLESLIEMGFSPSRAEKALAATGNQGIEPAMDWLVEHEDDPDIDEPSVVVPEDSDSGTTDTQGMDTCEERLPLTEEEKEKQTKRMMELIAQKQKEREEREKRERIEQEKQRRKQGQELSAVKQKIQEQEMQKAVEDRRREKQEEKLARDRVREKIARDKAERARRFGGAGSEPISPPAEASIPATTPSPSSPVQEPPTKKEYDQCRIQVRLLDGSALSQTFRAREQLAAVRLYVELNWPGGAPGPFNLLTSFPRRVFTEEDMEKPLQELGLVPSAVLIVARK.

One can recognise a UBA domain in the interval 1-42 (MAECSTLESLIEMGFSPSRAEKALAATGNQGIEPAMDWLVEH). The segment at 44–207 (DDPDIDEPSV…VQEPPTKKEY (164 aa)) is disordered. Composition is skewed to basic and acidic residues over residues 72–114 (CEER…EQEK) and 129–169 (KIQE…ERAR). Residues 72–164 (CEERLPLTEE…RVREKIARDK (93 aa)) are a coiled coil. The span at 176-197 (SEPISPPAEASIPATTPSPSSP) shows a compositional bias: low complexity. Residues 205–284 (KEYDQCRIQV…GLVPSAVLIV (80 aa)) enclose the UBX domain.

Its subcellular location is the cytoplasm. Component of a complex required to couple deglycosylation and proteasome-mediated degradation of misfolded proteins in the endoplasmic reticulum that are retrotranslocated in the cytosol. Involved in ubiquitin-proteasome systems. The chain is UBX domain-containing protein 1 (ubxn1) from Xenopus tropicalis (Western clawed frog).